The sequence spans 238 residues: ATP-dependent dethiobiotin synthetase BioD (238 aa).

13–18 (DIGKTF) serves as a coordination point for ATP. T17 lines the Mg(2+) pocket. K38 is an active-site residue. Residue S42 coordinates substrate. ATP-binding positions include D55, 116-119 (EGSG), 209-211 (PRI), and N216. D55 and E116 together coordinate Mg(2+).

This sequence belongs to the dethiobiotin synthetase family. Homodimer. Mg(2+) serves as cofactor.

The protein resides in the cytoplasm. It carries out the reaction (7R,8S)-7,8-diammoniononanoate + CO2 + ATP = (4R,5S)-dethiobiotin + ADP + phosphate + 3 H(+). The protein operates within cofactor biosynthesis; biotin biosynthesis; biotin from 7,8-diaminononanoate: step 1/2. Functionally, catalyzes a mechanistically unusual reaction, the ATP-dependent insertion of CO2 between the N7 and N8 nitrogen atoms of 7,8-diaminopelargonic acid (DAPA, also called 7,8-diammoniononanoate) to form a ureido ring. This is ATP-dependent dethiobiotin synthetase BioD from Clostridium novyi (strain NT).